Here is a 141-residue protein sequence, read N- to C-terminus: Nucleoside diphosphate kinase (141 aa).

Residues Lys11, Phe59, Arg87, Thr93, Arg104, and Asn114 each contribute to the ATP site. The active-site Pros-phosphohistidine intermediate is the His117.

It belongs to the NDK family. As to quaternary structure, homotetramer. The cofactor is Mg(2+).

The protein localises to the cytoplasm. It carries out the reaction a 2'-deoxyribonucleoside 5'-diphosphate + ATP = a 2'-deoxyribonucleoside 5'-triphosphate + ADP. The enzyme catalyses a ribonucleoside 5'-diphosphate + ATP = a ribonucleoside 5'-triphosphate + ADP. Functionally, major role in the synthesis of nucleoside triphosphates other than ATP. The ATP gamma phosphate is transferred to the NDP beta phosphate via a ping-pong mechanism, using a phosphorylated active-site intermediate. The sequence is that of Nucleoside diphosphate kinase from Paraburkholderia phymatum (strain DSM 17167 / CIP 108236 / LMG 21445 / STM815) (Burkholderia phymatum).